We begin with the raw amino-acid sequence, 366 residues long: MSSPQHVIIGLSGGVDSAVAACLLIKQGYHVTGLNIRVLDTPEDTPTLAPSAMRISDSEEFDFPVFTLNLSAKFARDVVGYFHDDYLAGRTPNPCMVCNKAIKWFGLFEAMRLLRADLVATGHYARTELRDAVTRLLKGVDPEKDQSYFLWMLTQAELAKTLFPLGGYTKAEVRELARSFGVHAAEKKESQEICFVPHDDYCAYLANAIPGLEARVAGGEIVDQAGKVIGHHRGYPFYTIGQRRGLGVSTGEPVYVTEIDAEHNRIHVGSKADLECRSLIASGMNWIGIATPDKSFEAEARIRYRDRQSACMIEPMDDNRAWVSFREPKQGVACGQAVVFYDGDEVLGGGIIAKVNPEAPPQKILG.

Residues G10–S17 and I36 contribute to the ATP site. C98 functions as the Nucleophile in the catalytic mechanism. C98 and C194 are oxidised to a cystine. G122 provides a ligand contact to ATP. The tract at residues K144–Q146 is interaction with tRNA. C194 serves as the catalytic Cysteine persulfide intermediate. The interaction with tRNA stretch occupies residues R303–Y304.

It belongs to the MnmA/TRMU family.

Its subcellular location is the cytoplasm. The enzyme catalyses S-sulfanyl-L-cysteinyl-[protein] + uridine(34) in tRNA + AH2 + ATP = 2-thiouridine(34) in tRNA + L-cysteinyl-[protein] + A + AMP + diphosphate + H(+). Catalyzes the 2-thiolation of uridine at the wobble position (U34) of tRNA, leading to the formation of s(2)U34. In Chlorobaculum tepidum (strain ATCC 49652 / DSM 12025 / NBRC 103806 / TLS) (Chlorobium tepidum), this protein is tRNA-specific 2-thiouridylase MnmA.